The sequence spans 282 residues: tRNA N(3)-cytidine methyltransferase METTL6 (282 aa).

Residues Trp-45, Tyr-49, Gly-87, Asp-110, Asp-136, Leu-137, and Ile-157 each contribute to the S-adenosyl-L-methionine site.

It belongs to the methyltransferase superfamily. METL family. In terms of assembly, monomer. Interacts with SARS1/SerRS; interaction is mediated via tRNA(Ser) and is required for N(3)-methylcytidine methylation.

It is found in the cytoplasm. The protein resides in the nucleus. It catalyses the reaction cytidine(32) in tRNA(Ser) + S-adenosyl-L-methionine = N(3)-methylcytidine(32) in tRNA(Ser) + S-adenosyl-L-homocysteine + H(+). Functionally, S-adenosyl-L-methionine-dependent methyltransferase that mediates N(3)-methylcytidine modification of residue 32 of the tRNA anticodon loop of tRNA(Ser), including tRNA(Ser)(UGA) and tRNA(Ser)(GCU). Interaction with SARS1/SerRS is required for N(3)-methylcytidine methylation. This chain is tRNA N(3)-cytidine methyltransferase METTL6, found in Mus musculus (Mouse).